The primary structure comprises 679 residues: MNNYKLQAPYQPNGDQPKAIKKLVQGVNSGEEFQTLLGATGTGKTFTIANVIQQTGRPALILAHNKTLAAQLCNELRQFFPKNAVEYFISYYDYYQPEAYVPVSDTYIAKTASINEEIDMLRHSATRSLFERKDVIVVASISCIYGLGIPSEYLKAAVKFAVGESIDLRSSLRALVDNQYTRNDTEITRGRFRIKGDVLEIGPAYEDRLIRIELFGDEIEAIRFVDPLTGEILESLDQVSVYPAKHFVTPKERLDSAISAIRNELKEQLDKFAYEGKLLEAQRLEQRTKYDLEMLREVGYCNGVENYARHLAGREEGTPPECLIDYFPKDWLLVVDESHVTCPQLHAMYNGDQARKKVLIDHGFRLPSAADNRPLKCEEFWEKSRQTLFISATPGQWELDQCEGKFIEQVIRPTGVLDPIIDVRPSDGQIDDLLSEIRVRAKKNQRVLVTTLTKRMAEDLTDFLSDNKVRVRYLHSEIHSIERIEIIQDLRLGEYDVLVGVNLLREGLDLPEVSLVAILDADKEGFLRAERSLIQTIGRAARHVEGVALLYADNFTESMKRAISETDRRRTIQKKYNQINGITPKPAGKKIENSILSFLELSRKLDTGGLSKDLINIVSNKTDDILNAKDNQCLLDEMPSLIDKLENKMKDAAKELNFEEAANLRDRIKKLRQKLSRNT.

The region spanning 25–412 (QGVNSGEEFQ…EGKFIEQVIR (388 aa)) is the Helicase ATP-binding domain. ATP is bound at residue 38-45 (GATGTGKT). Positions 91 to 114 (YYDYYQPEAYVPVSDTYIAKTASI) match the Beta-hairpin motif. Residues 429 to 583 (QIDDLLSEIR…KKYNQINGIT (155 aa)) enclose the Helicase C-terminal domain. The 36-residue stretch at 639 to 674 (PSLIDKLENKMKDAAKELNFEEAANLRDRIKKLRQK) folds into the UVR domain.

It belongs to the UvrB family. As to quaternary structure, forms a heterotetramer with UvrA during the search for lesions. Interacts with UvrC in an incision complex.

It is found in the cytoplasm. The UvrABC repair system catalyzes the recognition and processing of DNA lesions. A damage recognition complex composed of 2 UvrA and 2 UvrB subunits scans DNA for abnormalities. Upon binding of the UvrA(2)B(2) complex to a putative damaged site, the DNA wraps around one UvrB monomer. DNA wrap is dependent on ATP binding by UvrB and probably causes local melting of the DNA helix, facilitating insertion of UvrB beta-hairpin between the DNA strands. Then UvrB probes one DNA strand for the presence of a lesion. If a lesion is found the UvrA subunits dissociate and the UvrB-DNA preincision complex is formed. This complex is subsequently bound by UvrC and the second UvrB is released. If no lesion is found, the DNA wraps around the other UvrB subunit that will check the other stand for damage. The polypeptide is UvrABC system protein B (Prochlorococcus marinus subsp. pastoris (strain CCMP1986 / NIES-2087 / MED4)).